The primary structure comprises 274 residues: MPFRSNNPITRDELLSRFFPQFHPVTTFNSGLSGGSFLIEHQGQRFVVRQPHDPDAPRFAFLRQYRALSQLPACIAPKPHLYLRDWMVVDYLPGEVKTYLPDTNELAGLLYYLHQQPRFGWRITLLPLLELYWQQSDPARRTVGWLRRLKRLRKAREPRPLRLSPLHMDVHAGNLVHSASGLKLIDWEYAGDGDIALELAAVWVENTDQHRQLVNDYATRAKIYPAQLWRQVRRWFPWLLMLKAGWFEYRWRQTGDQQFIRLADDTWRQLLIKQ.

It belongs to the thiamine kinase family.

The catalysed reaction is thiamine + ATP = thiamine phosphate + ADP + H(+). It participates in cofactor biosynthesis; thiamine diphosphate biosynthesis; thiamine phosphate from thiamine: step 1/1. Catalyzes the ATP-dependent phosphorylation of thiamine to thiamine phosphate. Is involved in thiamine salvage. The sequence is that of Thiamine kinase from Escherichia coli O17:K52:H18 (strain UMN026 / ExPEC).